The primary structure comprises 107 residues: uncharacterized protein (107 aa).

This is an uncharacterized protein from Saccharomyces cerevisiae (strain ATCC 204508 / S288c) (Baker's yeast).